A 648-amino-acid polypeptide reads, in one-letter code: RAF proto-oncogene serine/threonine-protein kinase (648 aa).

Ser-29 is modified (phosphoserine; by MAPK1). Ser-43 bears the Phosphoserine; by PKA and MAPK1 mark. In terms of domain architecture, RBD spans 56-131 (NTIRVFLPNK…IGEELQVDFL (76 aa)). A Phorbol-ester/DAG-type zinc finger spans residues 138 to 184 (THNFARKTFLKLAFCDICQKFLLNGFRCQTCGYKFHEHCSTKVPTMC). 8 residues coordinate Zn(2+): His-139, Cys-152, Cys-155, Cys-165, Cys-168, His-173, Cys-176, and Cys-184. A disordered region spans residues 205–265 (GVPAPPSFPM…RSTSTPNVHM (61 aa)). Ser-233 is modified (phosphoserine; by PKA). Residues 239-265 (TFNTSSPSSEGSLSQRQRSTSTPNVHM) show a composition bias toward polar residues. Ser-252 carries the phosphoserine modification. At Ser-259 the chain carries Phosphoserine; by PKA, PKC and PKB/AKT1. Thr-268 carries the phosphothreonine; by autocatalysis modification. Thr-269 is modified (phosphothreonine; by PKA). The segment at 281–335 (IRSHSESASPSALSSSPNNLSPTGWSQPKTPVPAQRERAPGSGTQEKNKIRPRGQ) is disordered. The segment covering 286 to 301 (ESASPSALSSSPNNLS) has biased composition (low complexity). Residues Ser-289, Ser-296, and Ser-301 each carry the phosphoserine; by MAPK1 modification. Residues 331–349 (RPRGQRDSSYYWEIEASEV) are interaction with PEBP1/RKIP. Ser-338 carries the phosphoserine; by PAK1, PAK2, PAK3 and PAK5 modification. The residue at position 339 (Ser-339) is a Phosphoserine; by PAK1, PAK2 and PAK3. 2 positions are modified to phosphotyrosine; by SRC: Tyr-340 and Tyr-341. One can recognise a Protein kinase domain in the interval 349-609 (VMLSTRIGSG…PQILSSIELL (261 aa)). Residues 355–363 (IGSGSFGTV) and Lys-375 contribute to the ATP site. Asp-468 serves as the catalytic Proton acceptor. Phosphoserine is present on Ser-471. Thr-491 is modified (phosphothreonine). A Phosphoserine modification is found at Ser-494. A phosphoserine; by PKC mark is found at Ser-497 and Ser-499. At Arg-563 the chain carries Symmetric dimethylarginine; by PRMT5. Ser-621 bears the Phosphoserine mark. Phosphoserine; by MAPK1 is present on Ser-642.

It belongs to the protein kinase superfamily. TKL Ser/Thr protein kinase family. RAF subfamily. Monomer. Homodimer. Heterodimerizes with BRAF and this heterodimer possesses a highly increased kinase activity compared to the respective homodimers or monomers. Heterodimerization is mitogen-regulated and enhanced by 14-3-3 proteins. MAPK1/ERK2 activation can induce a negative feedback that promotes the dissociation of the heterodimer. Forms a multiprotein complex with Ras (M-Ras/MRAS), SHOC2 and protein phosphatase 1 (PPP1CA, PPP1CB and PPP1CC). Interacts with LZTR1. Interacts with Ras proteins; the interaction is antagonized by RIN1. Weakly interacts with RIT1. Interacts (via N-terminus) with RGS14 (via RBD domains); the interaction mediates the formation of a ternary complex with BRAF, a ternary complex inhibited by GNAI1. Probably forms a complex composed of chaperones HSP90 and HSP70, co-chaperones CDC37, PPP5C, TSC1 and client protein TSC2, CDK4, AKT, RAF1 and NR3C1; this complex does not contain co-chaperones STIP1/HOP and PTGES3/p23. Interacts with STK3/MST2; the interaction inhibits its pro-apoptotic activity. Interacts (when phosphorylated at Ser-259) with YWHAZ (unphosphorylated at 'Thr-232'). Interacts with MAP2K1/MEK1 and MAP2K2/MEK2. Interacts with MAP3K5/ASF1 (via N-terminus) and this interaction inhibits the proapoptotic function of MAP3K5/ASK1. Interacts with PAK1 (via kinase domain). The Ser-338 and Ser-339 phosphorylated form (by PAK1) interacts with BCL2. Interacts with PEBP1/RKIP and this interaction is enhanced if RAF1 is phosphorylated on residues Ser-338, Ser-339, Tyr-340 and Tyr-341. Interacts with ADCY2, ADCY5, ADCY6, DGKH, RCAN1/DSCR1, PPP1R12A, PKB/AKT1, SPRY2, SPRY4, CNKSR1/CNK1, KSR2 and PHB/prohibitin. The phosphorylated form interacts with PIN1. Interacts with PPP2CA, PPP2R1B and ROCK2. In its active form, interacts with PRMT5. Interacts with FAM83B; displaces 14-3-3 proteins from RAF1 and activates RAF1. Interacts with PDE8A; the interaction promotes RAF1 activity. Interacts with MFHAS1. Interacts with GLS. Interacts with NEK10 and MAP2K1; the interaction is direct with NEK10 and required for ERK1/2-signaling pathway activation in response to UV irradiation. Requires Zn(2+) as cofactor. Post-translationally, phosphorylation at Thr-269, Ser-338, Tyr-341, Thr-491 and Ser-494 results in its activation. Phosphorylation at Ser-29, Ser-43, Ser-289, Ser-296, Ser-301 and Ser-642 by MAPK1/ERK2 results in its inactivation. Phosphorylation at Ser-259 induces the interaction with YWHAZ and inactivates kinase activity. Dephosphorylation of Ser-259 by the SHOC2-MRAS-PP1c (SMP) complex consisting of SHOC2, GTP-bound M-Ras/MRAS and the catalytic subunit of protein phosphatase 1 (PPP1CA, PPP1CB or PPP1CC); this relieves inactivation and stimulates kinase activity. Phosphorylation at Ser-338 by PAK1 and PAK5 and Ser-339 by PAK1 is required for its mitochondrial localization. Phosphorylation at Ser-621 in response to growth factor treatment stabilizes the protein, possibly by preventing proteasomal degradation. Phosphorylation at Ser-289, Ser-296, Ser-301, Ser-338 and Ser-621 are somehow linked to the methylation potential of cells. Treatment of cells with HGF in the presence of the methylation inhibitor 5'-methylthioadenosine (MTA) results in increased phosphorylation at Ser-338 and Ser-621 and decreased phosphorylation at Ser-296, Ser-301 and Ser-338. Dephosphorylation at Ser-338 by PPP5C results in a decreased of activity. Methylated at Arg-563 in response to EGF treatment. This modification leads to destabilization of the protein, possibly through proteasomal degradation. Present in all tissues tested: testis, ovary, small intestine, colon, peripheral blood leukocytes, fetal liver, bone marrow, thymus, lymph node and spleen, and the cell lines melanoma G-361, lung carcinoma A-549, colorectal adenocarcinoma SW480, Burkitt's lymphoma Raji and lymphoblastic leukemia MOLT-4. In skeletal muscle, isoform 1 is more abundant than isoform 2.

Its subcellular location is the cytoplasm. It localises to the cell membrane. The protein resides in the mitochondrion. The protein localises to the nucleus. It catalyses the reaction L-seryl-[protein] + ATP = O-phospho-L-seryl-[protein] + ADP + H(+). The catalysed reaction is L-threonyl-[protein] + ATP = O-phospho-L-threonyl-[protein] + ADP + H(+). Its activity is regulated as follows. Regulation is a highly complex process involving membrane recruitment, protein-protein interactions, dimerization, and phosphorylation/dephosphorylation events. Ras-GTP recruits RAF1 to the membrane, thereby promoting its activation. The inactive conformation of RAF1 is maintained by autoinhibitory interactions occurring between the N-terminal regulatory and the C-terminal catalytic domains and by the binding of a 14-3-3 protein that contacts two phosphorylation sites, Ser-259 and Ser-621. Upon mitogenic stimulation, Ras and PPP2R1A cooperate to release autoinhibition and the subsequent phosphorylation of activating sites: Ser-338, Tyr-341, Thr-491, and Ser-494, yields a fully active kinase. Through a negative feedback mechanism involving MAPK1/ERK2, RAF1 is phosphorylated on Ser-29, Ser-43, Ser-289, Ser-296, Ser-301 and Ser-642 by MAPK1/ERK2, which yields an inactive, desensitized kinase. The signaling-competent conformation of RAF1 is finally re-established by the coordinated action of PIN1, a prolyl isomerase that converts pSer and pThr residues from the cis to the trans conformation, which is preferentially recognized and dephosphorylated by PPP2R1A. Activated by homodimerization and heterodimerization (with BRAF). Also regulated through association with other proteins such as KSR2, CNKSR1/CNK1, PEBP1/RKIP, PHB/prohibitin and SPRY4. PEBP1/RKIP acts by dissociating RAF1 from its substrates MAP2K1/MEK1 and MAP2K2/MEK2. PHB/prohibitin facilitates the displacement of 14-3-3 from RAF1 by activated Ras, thereby promoting cell membrane localization and phosphorylation of RAF1 at the activating Ser-338. SPRY4 inhibits Ras-independent, but not Ras-dependent, activation of RAF1. CNKSR1/CNK1 regulates Src-mediated RAF1 activation. Functionally, serine/threonine-protein kinase that acts as a regulatory link between the membrane-associated Ras GTPases and the MAPK/ERK cascade, and this critical regulatory link functions as a switch determining cell fate decisions including proliferation, differentiation, apoptosis, survival and oncogenic transformation. RAF1 activation initiates a mitogen-activated protein kinase (MAPK) cascade that comprises a sequential phosphorylation of the dual-specific MAPK kinases (MAP2K1/MEK1 and MAP2K2/MEK2) and the extracellular signal-regulated kinases (MAPK3/ERK1 and MAPK1/ERK2). The phosphorylated form of RAF1 (on residues Ser-338 and Ser-339, by PAK1) phosphorylates BAD/Bcl2-antagonist of cell death at 'Ser-75'. Phosphorylates adenylyl cyclases: ADCY2, ADCY5 and ADCY6, resulting in their activation. Phosphorylates PPP1R12A resulting in inhibition of the phosphatase activity. Phosphorylates TNNT2/cardiac muscle troponin T. Can promote NF-kB activation and inhibit signal transducers involved in motility (ROCK2), apoptosis (MAP3K5/ASK1 and STK3/MST2), proliferation and angiogenesis (RB1). Can protect cells from apoptosis also by translocating to the mitochondria where it binds BCL2 and displaces BAD/Bcl2-antagonist of cell death. Plays a role in the oncogenic transformation of epithelial cells via repression of the TJ protein, occludin (OCLN) by inducing the up-regulation of a transcriptional repressor SNAI2/SLUG, which induces down-regulation of OCLN. Restricts caspase activation in response to selected stimuli, notably Fas stimulation, pathogen-mediated macrophage apoptosis, and erythroid differentiation. Regulates Rho signaling and migration, and is required for normal wound healing. The chain is RAF proto-oncogene serine/threonine-protein kinase (Raf1) from Mus musculus (Mouse).